The chain runs to 334 residues: Probable fructose-bisphosphate aldolase class 1 (334 aa).

The protein belongs to the class I fructose-bisphosphate aldolase family.

It catalyses the reaction beta-D-fructose 1,6-bisphosphate = D-glyceraldehyde 3-phosphate + dihydroxyacetone phosphate. The protein operates within carbohydrate degradation; glycolysis; D-glyceraldehyde 3-phosphate and glycerone phosphate from D-glucose: step 4/4. The polypeptide is Probable fructose-bisphosphate aldolase class 1 (Xylella fastidiosa (strain Temecula1 / ATCC 700964)).